Consider the following 119-residue polypeptide: Large ribosomal subunit protein bL20 (119 aa).

The protein belongs to the bacterial ribosomal protein bL20 family.

Binds directly to 23S ribosomal RNA and is necessary for the in vitro assembly process of the 50S ribosomal subunit. It is not involved in the protein synthesizing functions of that subunit. The polypeptide is Large ribosomal subunit protein bL20 (Shouchella clausii (strain KSM-K16) (Alkalihalobacillus clausii)).